We begin with the raw amino-acid sequence, 463 residues long: Bifunctional protein HldE (463 aa).

The segment at 1 to 313 is ribokinase; that stretch reads MTGPMAVRTD…RALAALPDTD (313 aa). The active site involves Asp258. Positions 331–463 are cytidylyltransferase; sequence AAGGCFDLLH…LLARAAEGAR (133 aa).

It in the N-terminal section; belongs to the carbohydrate kinase PfkB family. The protein in the C-terminal section; belongs to the cytidylyltransferase family. As to quaternary structure, homodimer.

It carries out the reaction D-glycero-beta-D-manno-heptose 7-phosphate + ATP = D-glycero-beta-D-manno-heptose 1,7-bisphosphate + ADP + H(+). The enzyme catalyses D-glycero-beta-D-manno-heptose 1-phosphate + ATP + H(+) = ADP-D-glycero-beta-D-manno-heptose + diphosphate. It functions in the pathway nucleotide-sugar biosynthesis; ADP-L-glycero-beta-D-manno-heptose biosynthesis; ADP-L-glycero-beta-D-manno-heptose from D-glycero-beta-D-manno-heptose 7-phosphate: step 1/4. It participates in nucleotide-sugar biosynthesis; ADP-L-glycero-beta-D-manno-heptose biosynthesis; ADP-L-glycero-beta-D-manno-heptose from D-glycero-beta-D-manno-heptose 7-phosphate: step 3/4. In terms of biological role, catalyzes the phosphorylation of D-glycero-D-manno-heptose 7-phosphate at the C-1 position to selectively form D-glycero-beta-D-manno-heptose-1,7-bisphosphate. Functionally, catalyzes the ADP transfer from ATP to D-glycero-beta-D-manno-heptose 1-phosphate, yielding ADP-D-glycero-beta-D-manno-heptose. This Streptomyces coelicolor (strain ATCC BAA-471 / A3(2) / M145) protein is Bifunctional protein HldE.